Here is a 141-residue protein sequence, read N- to C-terminus: Short-chain diamines transporter (141 aa).

4 consecutive transmembrane segments (helical) span residues 16–36, 39–59, 76–96, and 103–123; these read VILLVIIAIALSFIFDVPLEV, TLGIVMAVTSVFWNMIFNHFF, ILHAIGFEGGLMLVTIPMVAY, and WQAIVLDFGLTMCILVYTFIF.

It belongs to the proteobacterial antimicrobial compound efflux (PACE) (TC 2.A.117) family.

The protein localises to the cell inner membrane. Its function is as follows. Mediates the efflux of short-chain diamines when energized by an electrochemical gradient. Involved in resistance to the synthetic biocide chlorhexidine, a widely used antiseptic and disinfectant in both hospital and community settings. Interacts directly with chlorhexidine and mediates its efflux via an energy-dependent mechanism. This chain is Short-chain diamines transporter, found in Acinetobacter baylyi (strain ATCC 33305 / BD413 / ADP1).